The following is a 510-amino-acid chain: Light-independent protochlorophyllide reductase subunit B (510 aa).

Asp36 contacts [4Fe-4S] cluster. Asp296 functions as the Proton donor in the catalytic mechanism. Substrate is bound at residue 431-432 (GM).

The protein belongs to the ChlB/BchB/BchZ family. As to quaternary structure, protochlorophyllide reductase is composed of three subunits; ChlL, ChlN and ChlB. Forms a heterotetramer of two ChlB and two ChlN subunits. [4Fe-4S] cluster serves as cofactor.

The protein resides in the plastid. It is found in the chloroplast. The catalysed reaction is chlorophyllide a + oxidized 2[4Fe-4S]-[ferredoxin] + 2 ADP + 2 phosphate = protochlorophyllide a + reduced 2[4Fe-4S]-[ferredoxin] + 2 ATP + 2 H2O. The protein operates within porphyrin-containing compound metabolism; chlorophyll biosynthesis (light-independent). Its function is as follows. Component of the dark-operative protochlorophyllide reductase (DPOR) that uses Mg-ATP and reduced ferredoxin to reduce ring D of protochlorophyllide (Pchlide) to form chlorophyllide a (Chlide). This reaction is light-independent. The NB-protein (ChlN-ChlB) is the catalytic component of the complex. The protein is Light-independent protochlorophyllide reductase subunit B of Angiopteris evecta (Mule's foot fern).